Reading from the N-terminus, the 207-residue chain is Protein TEX261 homolog (207 aa).

The next 4 helical transmembrane spans lie at 2–22 (FLSLLILLSYALGFVFCVVCL), 54–74 (IIFLLGIFEDLDFTSLLFSFI), 94–114 (YKFILSVLSFIISHISWFIYF), and 126–146 (IIAIFTFCVWLIPLIFFISLA).

Belongs to the SVP26 family.

Its subcellular location is the membrane. This Dictyostelium discoideum (Social amoeba) protein is Protein TEX261 homolog.